We begin with the raw amino-acid sequence, 84 residues long: Small ribosomal subunit protein uS15 (84 aa).

The protein belongs to the universal ribosomal protein uS15 family. Part of the 30S ribosomal subunit. Forms a bridge to the 50S subunit in the 70S ribosome, contacting the 23S rRNA.

In terms of biological role, one of the primary rRNA binding proteins, it binds directly to 16S rRNA where it helps nucleate assembly of the platform of the 30S subunit by binding and bridging several RNA helices of the 16S rRNA. Forms an intersubunit bridge (bridge B4) with the 23S rRNA of the 50S subunit in the ribosome. This chain is Small ribosomal subunit protein uS15, found in Fervidobacterium nodosum (strain ATCC 35602 / DSM 5306 / Rt17-B1).